A 393-amino-acid chain; its full sequence is Exosome complex component RRP45 (393 aa).

The segment at 1-268 (MRDTPLSNCE…SEITELINKA (268 aa)) is ARE binding.

This sequence belongs to the RNase PH family. As to quaternary structure, component of the RNA exosome complex.

The protein localises to the cytoplasm. The protein resides in the nucleus. It is found in the nucleolus. It localises to the nucleoplasm. Non-catalytic component of the RNA exosome complex which has 3'-&gt;5' exoribonuclease activity and participates in a multitude of cellular RNA processing and degradation events. In the nucleus, the RNA exosome complex is involved in proper maturation of stable RNA species such as rRNA, snRNA and snoRNA, in the elimination of RNA processing by-products and non-coding 'pervasive' transcripts, such as antisense RNA species and promoter-upstream transcripts (PROMPTs), and of mRNAs with processing defects, thereby limiting or excluding their export to the cytoplasm. In the cytoplasm, the RNA exosome complex is involved in general mRNA turnover and specifically degrades inherently unstable mRNAs containing AU-rich elements (AREs) within their 3' untranslated regions, and in RNA surveillance pathways, preventing translation of aberrant mRNAs. The sequence is that of Exosome complex component RRP45 from Danio rerio (Zebrafish).